We begin with the raw amino-acid sequence, 281 residues long: tRNA uridine(34) hydroxylase (281 aa).

Residues 125 to 222 (AREDVKTIDT…YFLKTKNKDG (98 aa)) form the Rhodanese domain. Cys-182 (cysteine persulfide intermediate) is an active-site residue.

It belongs to the TrhO family.

It catalyses the reaction uridine(34) in tRNA + AH2 + O2 = 5-hydroxyuridine(34) in tRNA + A + H2O. In terms of biological role, catalyzes oxygen-dependent 5-hydroxyuridine (ho5U) modification at position 34 in tRNAs. The chain is tRNA uridine(34) hydroxylase from Neorickettsia sennetsu (strain ATCC VR-367 / Miyayama) (Ehrlichia sennetsu).